Here is a 725-residue protein sequence, read N- to C-terminus: Exocyst complex component 8 (725 aa).

Position 19 is a phosphoserine (S19). Positions 116 to 159 (AASGGEEGGGGAGGRDQLRGQTGFFPSPGGASRDGSGPGEEGKQ) are disordered. Over residues 120-129 (GEEGGGGAGG) the composition is skewed to gly residues. The PH domain occupies 182–282 (YLVYNGDLVE…WLEVLEETKR (101 aa)). Positions 285–322 (SEKRRREQEEAAAPRGPPQVTPKASNPFEDEDDDEPTV) are disordered. Positions 312 to 322 (FEDEDDDEPTV) are enriched in acidic residues.

It belongs to the EXO84 family. The exocyst complex is composed of EXOC1, EXOC2, EXOC3, EXOC4, EXOC5, EXOC6, EXOC7 and EXOC8. Interacts (via PH domain) with GTP-bound RALA and RALB. Interacts with SH3BP1; required for the localization of both SH3BP1 and the exocyst to the leading edge of migrating cells.

The protein localises to the cytoplasm. The protein resides in the perinuclear region. It localises to the cell projection. Its subcellular location is the growth cone. Functionally, component of the exocyst complex involved in the docking of exocytic vesicles with fusion sites on the plasma membrane. This is Exocyst complex component 8 (EXOC8) from Bos taurus (Bovine).